Consider the following 395-residue polypeptide: Lipoyl synthase, mitochondrial (395 aa).

A mitochondrion-targeting transit peptide spans methionine 1–phenylalanine 24. [4Fe-4S] cluster-binding residues include cysteine 107, cysteine 112, cysteine 118, cysteine 137, cysteine 141, cysteine 144, and serine 357. Residues glycine 122–leucine 346 form the Radical SAM core domain.

The protein belongs to the radical SAM superfamily. Lipoyl synthase family. Requires [4Fe-4S] cluster as cofactor.

It localises to the mitochondrion. It catalyses the reaction [[Fe-S] cluster scaffold protein carrying a second [4Fe-4S](2+) cluster] + N(6)-octanoyl-L-lysyl-[protein] + 2 oxidized [2Fe-2S]-[ferredoxin] + 2 S-adenosyl-L-methionine + 4 H(+) = [[Fe-S] cluster scaffold protein] + N(6)-[(R)-dihydrolipoyl]-L-lysyl-[protein] + 4 Fe(3+) + 2 hydrogen sulfide + 2 5'-deoxyadenosine + 2 L-methionine + 2 reduced [2Fe-2S]-[ferredoxin]. It functions in the pathway protein modification; protein lipoylation via endogenous pathway; protein N(6)-(lipoyl)lysine from octanoyl-[acyl-carrier-protein]: step 2/2. Catalyzes the radical-mediated insertion of two sulfur atoms into the C-6 and C-8 positions of the octanoyl moiety bound to the lipoyl domains of lipoate-dependent enzymes, thereby converting the octanoylated domains into lipoylated derivatives. The chain is Lipoyl synthase, mitochondrial from Cryptococcus neoformans var. neoformans serotype D (strain B-3501A) (Filobasidiella neoformans).